The primary structure comprises 334 residues: Probable tRNA pseudouridine synthase B (334 aa).

Residue aspartate 82 is the Nucleophile of the active site. Residues 250-325 form the PUA domain; it reads LPKIWIKDSA…IAVDVEKVFM (76 aa).

The protein belongs to the pseudouridine synthase TruB family. Type 2 subfamily.

The enzyme catalyses uridine(55) in tRNA = pseudouridine(55) in tRNA. Its function is as follows. Could be responsible for synthesis of pseudouridine from uracil-55 in the psi GC loop of transfer RNAs. The protein is Probable tRNA pseudouridine synthase B of Pyrococcus abyssi (strain GE5 / Orsay).